The primary structure comprises 826 residues: Villin-1 (826 aa).

The interval 1 to 734 (MVELSKKVTG…YDELKAELGD (734 aa)) is core. Residues 27-76 (MEMVPVPTKSYGNFYEGDCYVLLSTRKTGSGFSYNIHYWLGKNSSQDEQG) form a Gelsolin-like 1 repeat. Position 112–119 (112–119 (KQGLIYKQ)) interacts with a 1,2-diacyl-sn-glycero-3-phospho-(1D-myo-inositol-4,5-bisphosphate). Residues 129–137 (VETNTYNVQ) are crucial for binding an actin filament. 138 to 146 (RLLHVKGKK) contributes to the a 1,2-diacyl-sn-glycero-3-phospho-(1D-myo-inositol-4,5-bisphosphate) binding site. 5 Gelsolin-like repeats span residues 148–188 (VVAA…AERL), 265–309 (LVIQ…EEKQ), 408–457 (QELV…DELA), 528–568 (TKAF…DERE), and 631–672 (FLAT…SEKE). The tract at residues 735 to 826 (NASIGQLVSG…QNLKKEKGLF (92 aa)) is headpiece. The HP domain maps to 760–826 (PTKLETFPLD…QNLKKEKGLF (67 aa)). The segment at 820–823 (KKEK) is absolutely required for activity.

The protein belongs to the villin/gelsolin family. Monomer. Homodimer. Associates with F-actin; the association with F-actin is inhibited by tropomyosin. In terms of processing, phosphorylated on tyrosine residues. The unphosphorylated form increases the initial rate of actin-nucleating activity, whereas the tyrosine-phosphorylated form inhibits actin-nucleating activity, enhances actin-bundling activity and enhances actin-severing activity by reducing high Ca(2+) requirements. The tyrosine-phosphorylated form does not regulate actin-capping activity. Tyrosine phosphorylation is essential for cell migration: tyrosine phosphorylation sites in the N-terminus half regulate actin reorganization and cell morphology, whereas tyrosine phosphorylation sites in the C-terminus half regulate cell migration. Tyrosine phosphorylation is induced by epidermal growth factor (EGF) and stimulates cell migration. In terms of tissue distribution, specifically expressed in epithelial cells. Component of brush border microvilli.

Its subcellular location is the cytoplasm. The protein localises to the cytoskeleton. The protein resides in the cell projection. It localises to the microvillus. It is found in the lamellipodium. Its subcellular location is the ruffle. The protein localises to the filopodium tip. The protein resides in the filopodium. Functionally, epithelial cell-specific Ca(2+)-regulated actin-modifying protein that modulates the reorganization of microvillar actin filaments. Plays a role in the actin nucleation, actin filament bundle assembly, actin filament capping and severing. Binds phosphatidylinositol 4,5-bisphosphate (PIP2) and lysophosphatidic acid (LPA); binds LPA with higher affinity than PIP2. Binding to LPA increases its phosphorylation by SRC and inhibits all actin-modifying activities. Binding to PIP2 inhibits actin-capping and -severing activities but enhances actin-bundling activity. Regulates the intestinal epithelial cell morphology, cell invasion, cell migration and apoptosis. Protects against apoptosis induced by dextran sodium sulfate (DSS) in the gastrointestinal epithelium. Appears to regulate cell death by maintaining mitochondrial integrity. Enhances hepatocyte growth factor (HGF)-induced epithelial cell motility, chemotaxis and wound repair. Its actin-bundling activity is inhibited by tropomyosin. The polypeptide is Villin-1 (VIL1) (Gallus gallus (Chicken)).